The sequence spans 208 residues: MARYRGPVEKIERRFGVSLNLKGERRLAGKSSLEKRPYAPGQHGQRRSKISEYGLQLREKQKAKFMYGISEKQFRSIFQEANRLEGNTGELLIKLLERRLDNVVYRMGFATTRRFARQMVSHGHVLVDGKRVNIPSYMVLPGQKVEIREKSKNNPQVQRSIELTKQTGIAPWVDVDQAKVFGIFTRLPEREEVVIPVEERLIVELYSK.

The interval 30–51 (KSSLEKRPYAPGQHGQRRSKIS) is disordered. An S4 RNA-binding domain is found at 98-161 (RRLDNVVYRM…KNNPQVQRSI (64 aa)).

Belongs to the universal ribosomal protein uS4 family. As to quaternary structure, part of the 30S ribosomal subunit. Contacts protein S5. The interaction surface between S4 and S5 is involved in control of translational fidelity.

In terms of biological role, one of the primary rRNA binding proteins, it binds directly to 16S rRNA where it nucleates assembly of the body of the 30S subunit. Functionally, with S5 and S12 plays an important role in translational accuracy. In Wolinella succinogenes (strain ATCC 29543 / DSM 1740 / CCUG 13145 / JCM 31913 / LMG 7466 / NCTC 11488 / FDC 602W) (Vibrio succinogenes), this protein is Small ribosomal subunit protein uS4.